The primary structure comprises 395 residues: Leukosialin (395 aa).

A signal peptide spans 1–19 (MALHLLLLFGACWVQVASP). Residues 20–248 (DSLQRTTMLP…TRSPSQESSG (229 aa)) are Extracellular-facing. Over residues 27–56 (MLPSTPHITAPSTSEAQNASPSVSVGSGTV) the composition is skewed to polar residues. Residues 27–245 (MLPSTPHITA…PITTRSPSQE (219 aa)) are disordered. A compositionally biased stretch (low complexity) spans 73 to 88 (SLTPLETTELSSLETS). Polar residues-rich tracts occupy residues 89–111 (AGAS…SKTS) and 145–154 (TAASTSISKG). Residues 155 to 166 (TSAPPTTVTTSS) are compositionally biased toward low complexity. A glycan (N-linked (GlcNAc...) asparagine) is linked at Asn-167. A compositionally biased stretch (polar residues) spans 167 to 196 (NETSGPSVATTVSSKTSGPPVTTATGSLGP). Residues 205–241 (ATTATSSVESSSVARGTSVSSRKTSTTSTQDPITTRS) are compositionally biased toward low complexity. Residues 249-271 (MLLVPMLIALVVVLALVALLLLW) traverse the membrane as a helical segment. Positions 272–302 (RQRQKRRTGALTLSGGGKRNGVVDAWAGPAR) are required for interaction with EZR, MSN and RDX and for co-localization to microvilli. The Cytoplasmic segment spans residues 272 to 395 (RQRQKRRTGA…AKDEAAPQSL (124 aa)). The Nuclear localization signal motif lies at 276 to 290 (KRRTGALTLSGGGKR). Ser-285 and Ser-328 each carry phosphoserine. The segment at 303-395 (VPDEEATTTS…AKDEAAPQSL (93 aa)) is disordered. Residues 327 to 338 (GSGQRPTLTTFF) show a composition bias toward polar residues. At Thr-333 the chain carries Phosphothreonine. A phosphoserine mark is found at Ser-339 and Ser-343. Ser-347 is subject to Phosphoserine; by PKC/PRKCQ. A Phosphoserine modification is found at Ser-371. Thr-378 carries the phosphothreonine modification. A compositionally biased stretch (basic and acidic residues) spans 385–395 (QAKDEAAPQSL).

In terms of assembly, interacts with SIGLEC1. Interacts with isoform 2 of HIPK2. Interacts with CTNNB1. Interacts with RDX (via FERM domain). Interacts with EZR. Interacts with MSN. Phosphorylation at Ser-347 is regulated by chemokines, requires its association with ERM proteins (EZR, RDX and MSN) and is essential for its function in the regulation of T-cell trafficking to lymph nodes. Post-translationally, has a high content of sialic acid and O-linked carbohydrate structures. In terms of processing, cleavage by CTSG releases its extracellular domain and triggers its intramembrane proteolysis by gamma-secretase releasing the CD43 cytoplasmic tail chain (CD43-ct) which translocates to the nucleus. Sumoylated. In terms of tissue distribution, cell surface of thymocytes, T-lymphocytes, neutrophils, plasma cells and myelomas.

Its subcellular location is the membrane. It localises to the cell projection. It is found in the microvillus. The protein localises to the uropodium. The protein resides in the nucleus. Its subcellular location is the PML body. Functionally, predominant cell surface sialoprotein of leukocytes which regulates multiple T-cell functions, including T-cell activation, proliferation, differentiation, trafficking and migration. Positively regulates T-cell trafficking to lymph-nodes via its association with ERM proteins (EZR, RDX and MSN). Negatively regulates Th2 cell differentiation and predisposes the differentiation of T-cells towards a Th1 lineage commitment. Promotes the expression of IFN-gamma by T-cells during T-cell receptor (TCR) activation of naive cells and induces the expression of IFN-gamma by CD4(+) T-cells and to a lesser extent by CD8(+) T-cells. Plays a role in preparing T-cells for cytokine sensing and differentiation into effector cells by inducing the expression of cytokine receptors IFNGR and IL4R, promoting IFNGR and IL4R signaling and by mediating the clustering of IFNGR with TCR. Acts as a major E-selectin ligand responsible for Th17 cell rolling on activated vasculature and recruitment during inflammation. Mediates Th17 cells, but not Th1 cells, adhesion to E-selectin. Acts as a T-cell counter-receptor for SIGLEC1. In terms of biological role, protects cells from apoptotic signals, promoting cell survival. The protein is Leukosialin (Spn) of Mus musculus (Mouse).